The sequence spans 526 residues: Alpha-N-acetylgalactosaminide alpha-2,6-sialyltransferase 1 (526 aa).

At Met-1–Gln-12 the chain is on the cytoplasmic side. The chain crosses the membrane as a helical; Signal-anchor for type II membrane protein span at residues Ala-13–Pro-33. Over Arg-34 to Asn-526 the chain is Lumenal. The disordered stretch occupies residues Ser-49–Ser-182. Positions Lys-81–Thr-106 are enriched in basic and acidic residues. Over residues Ala-161 to Pro-171 the composition is skewed to polar residues. N-linked (GlcNAc...) asparagine glycans are attached at residues Asn-206, Asn-228, Asn-259, Asn-303, and Asn-388. Intrachain disulfides connect Cys-207/Cys-290 and Cys-293/Cys-461.

It belongs to the glycosyltransferase 29 family. Post-translationally, glycosylated; autosialylated. In terms of tissue distribution, submaxillary gland, mammary gland, spleen and colon.

Its subcellular location is the golgi apparatus membrane. It catalyses the reaction a beta-D-galactosyl-(1-&gt;3)-N-acetyl-alpha-D-galactosaminyl derivative + CMP-N-acetyl-beta-neuraminate = a beta-D-galactosyl-(1-&gt;3)-[N-acetyl-alpha-neuraminyl-(2-&gt;6)]-N-acetyl-alpha-D-galactosaminyl derivative + CMP + H(+). The enzyme catalyses a 3-O-[N-acetyl-alpha-D-galactosaminyl]-L-seryl-[protein] + CMP-N-acetyl-beta-neuraminate = a 3-O-[N-acetyl-alpha-neuraminosyl-(2-&gt;6)-N-acetyl-alpha-D-galactosaminyl]-L-seryl-[protein] + CMP + H(+). The catalysed reaction is a 3-O-[N-acetyl-alpha-D-galactosaminyl]-L-threonyl-[protein] + CMP-N-acetyl-beta-neuraminate = a 3-O-[N-acetyl-alpha-neuraminosyl-(2-&gt;6)-N-acetyl-alpha-D-galactosaminyl]-L-threonyl-[protein] + CMP + H(+). It carries out the reaction a 3-O-[beta-D-galactosyl-(1-&gt;3)-N-acetyl-alpha-D-galactosaminyl]-L-seryl-[protein] + CMP-N-acetyl-beta-neuraminate = a 3-O-{beta-D-galactosyl-(1-&gt;3)-[N-acetyl-alpha-neuraminosyl-(2-&gt;6)]-N-acetyl-alpha-D-galactosaminyl}-L-seryl-[protein] + CMP + H(+). It catalyses the reaction a 3-O-[beta-D-galactosyl-(1-&gt;3)-N-acetyl-alpha-D-galactosaminyl]-L-threonyl-[protein] + CMP-N-acetyl-beta-neuraminate = a 3-O-{beta-D-galactosyl-(1-&gt;3)-[N-acetyl-alpha-neuraminosyl-(2-&gt;6)]-N-acetyl-alpha-D-galactosaminyl}-L-threonyl-[protein] + CMP + H(+). The enzyme catalyses a 3-O-[N-acetyl-alpha-neuraminyl-(2-&gt;3)-beta-D-galactosyl-(1-&gt;3)-N-acetyl-alpha-D-galactosaminyl]-L-threonyl-[protein] + CMP-N-acetyl-beta-neuraminate = a 3-O-{alpha-Neu5Ac-(2-&gt;3)-beta-D-Gal-(1-&gt;3)-[alpha-Neu5Ac-(2-&gt;6)]-alpha-D-GalNAc}-L-threonyl-[protein] + CMP + H(+). The protein operates within protein modification; protein glycosylation. In terms of biological role, protein sialyltransferase specifically expressed in goblet cells that plays a key role in intestinal host-commensal homeostasis. Conjugates sialic acid with an alpha-2-6 linkage to N-acetylgalactosamine (GalNAc) glycan chains linked to serine or threonine in glycoproteins. Catalyzes the formation of the sialyl-Tn (S-Tn) antigen, an antigen found in intestinal goblet cells. Protein sialylation in globlet cells is essential for mucus integrity and is required to protect the intestinal mucus against excessive bacterial proteolytic degradation. This is Alpha-N-acetylgalactosaminide alpha-2,6-sialyltransferase 1 from Mus musculus (Mouse).